Consider the following 1159-residue polypeptide: ABC transporter G family member 24 (1159 aa).

The next 2 helical transmembrane spans lie at 11-31 and 415-435; these read FNSILKSILLLLLLFINGNNC and VGSGVGFIGLTLLIGAIFLIF. Residues 454-707 enclose the ABC transporter domain; that stretch reads LSFHNISCYV…FIKQKIAGMT (254 aa). 497 to 504 lines the ATP pocket; that stretch reads GLSGSGKT. A disordered region spans residues 752–846; the sequence is QSTSPALSSN…DNNNKNNDDD (95 aa). 2 stretches are compositionally biased toward low complexity: residues 759–768 and 775–784; these read SSNSNNSDIN and INNPHNQNIH. A compositionally biased stretch (basic residues) spans 785 to 795; sequence HQQHHHHHRHI. A compositionally biased stretch (low complexity) spans 822–841; it reads DNINNNNNNNKVKNNDNNNK. The ABC transmembrane type-2 domain occupies 902 to 1154; sequence FLLRTTYFVH…LLAYVFLRFL (253 aa). 6 consecutive transmembrane segments (helical) span residues 909 to 929, 937 to 957, 1005 to 1025, 1047 to 1067, 1074 to 1094, and 1135 to 1155; these read FVHIFVGLTLGYLFWKLPANL, FGAMFFMTALLSFGSITSLDL, YMIGLRPGILHFIYFLISLVL, ANMVSILLLFVFLLFDGFLLA, YLIGLVWISFMSYGLEIPVVN, and VLLGMIVGYLLLAYVFLRFLV.

The protein belongs to the ABC transporter superfamily. ABCG family. Eye pigment precursor importer (TC 3.A.1.204) subfamily.

The protein localises to the membrane. This is ABC transporter G family member 24 (abcG24) from Dictyostelium discoideum (Social amoeba).